A 333-amino-acid polypeptide reads, in one-letter code: Cytochrome f (333 aa).

An N-terminal signal peptide occupies residues 1 to 44 (MRNASVTARLTRSVRAIVKTLLIAIATVTFYFSCDLALPQSAAA). Heme contacts are provided by Tyr45, Cys66, Cys69, and His70. A helical membrane pass occupies residues 301–318 (GLIAFVALVMLAQVMLVL).

It belongs to the cytochrome f family. In terms of assembly, the 4 large subunits of the cytochrome b6-f complex are cytochrome b6, subunit IV (17 kDa polypeptide, PetD), cytochrome f and the Rieske protein, while the 4 small subunits are PetG, PetL, PetM and PetN. The complex functions as a dimer. Heme is required as a cofactor.

The protein resides in the cellular thylakoid membrane. Its function is as follows. Component of the cytochrome b6-f complex, which mediates electron transfer between photosystem II (PSII) and photosystem I (PSI), cyclic electron flow around PSI, and state transitions. In Desmonostoc sp. (strain PCC 7906) (Nostoc sp. (strain PCC 7906)), this protein is Cytochrome f (petA).